Reading from the N-terminus, the 68-residue chain is uncharacterized protein (68 aa).

This is an uncharacterized protein from Bacillus subtilis (strain 168).